The following is a 336-amino-acid chain: Nicotinate-nucleotide--dimethylbenzimidazole phosphoribosyltransferase (336 aa).

Glutamate 304 functions as the Proton acceptor in the catalytic mechanism.

This sequence belongs to the CobT family.

It catalyses the reaction 5,6-dimethylbenzimidazole + nicotinate beta-D-ribonucleotide = alpha-ribazole 5'-phosphate + nicotinate + H(+). Its pathway is nucleoside biosynthesis; alpha-ribazole biosynthesis; alpha-ribazole from 5,6-dimethylbenzimidazole: step 1/2. Functionally, catalyzes the synthesis of alpha-ribazole-5'-phosphate from nicotinate mononucleotide (NAMN) and 5,6-dimethylbenzimidazole (DMB). The sequence is that of Nicotinate-nucleotide--dimethylbenzimidazole phosphoribosyltransferase from Mesorhizobium japonicum (strain LMG 29417 / CECT 9101 / MAFF 303099) (Mesorhizobium loti (strain MAFF 303099)).